The sequence spans 126 residues: Methylglyoxal synthase (126 aa).

One can recognise an MGS-like domain in the interval 1–126 (MEKKIALIAH…LIKGLESLIF (126 aa)). Residues histidine 10, lysine 14, 36–39 (TGTT), and 56–57 (SG) each bind substrate. Residue aspartate 62 is the Proton donor/acceptor of the active site. Histidine 89 is a substrate binding site.

The protein belongs to the methylglyoxal synthase family.

It carries out the reaction dihydroxyacetone phosphate = methylglyoxal + phosphate. Its function is as follows. Catalyzes the formation of methylglyoxal from dihydroxyacetone phosphate. The sequence is that of Methylglyoxal synthase from Borreliella burgdorferi (strain ATCC 35210 / DSM 4680 / CIP 102532 / B31) (Borrelia burgdorferi).